Here is a 380-residue protein sequence, read N- to C-terminus: Homoserine O-acetyltransferase (380 aa).

Positions Asn59–Glu363 constitute an AB hydrolase-1 domain. Ser164 (nucleophile) is an active-site residue. Arg234 provides a ligand contact to substrate. Catalysis depends on residues Asp327 and His357. Substrate is bound at residue Asp358.

The protein belongs to the AB hydrolase superfamily. MetX family. As to quaternary structure, homodimer.

The protein localises to the cytoplasm. It carries out the reaction L-homoserine + acetyl-CoA = O-acetyl-L-homoserine + CoA. Its pathway is amino-acid biosynthesis; L-methionine biosynthesis via de novo pathway; O-acetyl-L-homoserine from L-homoserine: step 1/1. Functionally, transfers an acetyl group from acetyl-CoA to L-homoserine, forming acetyl-L-homoserine. The polypeptide is Homoserine O-acetyltransferase (Mycolicibacterium smegmatis (strain ATCC 700084 / mc(2)155) (Mycobacterium smegmatis)).